The following is a 424-amino-acid chain: Histidine--tRNA ligase (424 aa).

The protein belongs to the class-II aminoacyl-tRNA synthetase family. In terms of assembly, homodimer.

It localises to the cytoplasm. It carries out the reaction tRNA(His) + L-histidine + ATP = L-histidyl-tRNA(His) + AMP + diphosphate + H(+). This chain is Histidine--tRNA ligase, found in Pectobacterium carotovorum subsp. carotovorum (strain PC1).